A 416-amino-acid polypeptide reads, in one-letter code: Phosphatidylserine decarboxylase proenzyme, mitochondrial (416 aa).

Over 1 to 67 (MPGKSTRPLP…GRLHFPQLAL (67 aa)) the chain is Mitochondrial matrix. The chain crosses the membrane as a helical span at residues 68–86 (RRRLGQLSCMSKPALKLRS). The Mitochondrial intermembrane segment spans residues 87 to 416 (WPLTVLYYLL…IRFGEALGSL (330 aa)). Active-site charge relay system; for autoendoproteolytic cleavage activity residues include Asp-198, His-274, and Ser-385. Catalysis depends on Ser-385, which acts as the Schiff-base intermediate with substrate; via pyruvic acid; for decarboxylase activity. Ser-385 carries the pyruvic acid (Ser); by autocatalysis modification.

The protein belongs to the phosphatidylserine decarboxylase family. PSD-B subfamily. Eukaryotic type I sub-subfamily. Heterodimer of a large membrane-associated beta subunit and a small pyruvoyl-containing alpha subunit. Pyruvate serves as cofactor. In terms of processing, is synthesized initially as an inactive proenzyme. Formation of the active enzyme involves a self-maturation process in which the active site pyruvoyl group is generated from an internal serine residue via an autocatalytic post-translational modification. Two non-identical subunits are generated from the proenzyme in this reaction, and the pyruvate is formed at the N-terminus of the alpha chain, which is derived from the carboxyl end of the proenzyme. The autoendoproteolytic cleavage occurs by a canonical serine protease mechanism, in which the side chain hydroxyl group of the serine supplies its oxygen atom to form the C-terminus of the beta chain, while the remainder of the serine residue undergoes an oxidative deamination to produce ammonia and the pyruvoyl prosthetic group on the alpha chain. During this reaction, the Ser that is part of the protease active site of the proenzyme becomes the pyruvoyl prosthetic group, which constitutes an essential element of the active site of the mature decarboxylase.

Its subcellular location is the mitochondrion inner membrane. The protein localises to the cytoplasm. It is found in the lipid droplet. The enzyme catalyses a 1,2-diacyl-sn-glycero-3-phospho-L-serine + H(+) = a 1,2-diacyl-sn-glycero-3-phosphoethanolamine + CO2. It functions in the pathway phospholipid metabolism; phosphatidylethanolamine biosynthesis. In terms of biological role, catalyzes the formation of phosphatidylethanolamine (PtdEtn) from phosphatidylserine (PtdSer). Plays a central role in phospholipid metabolism and in the interorganelle trafficking of phosphatidylserine. May be involved in lipid droplet biogenesis at the endoplasmic reticulum membrane. This chain is Phosphatidylserine decarboxylase proenzyme, mitochondrial, found in Bos taurus (Bovine).